A 55-amino-acid polypeptide reads, in one-letter code: Large ribosomal subunit protein bL33 (55 aa).

The protein belongs to the bacterial ribosomal protein bL33 family.

The polypeptide is Large ribosomal subunit protein bL33 (Leifsonia xyli subsp. xyli (strain CTCB07)).